We begin with the raw amino-acid sequence, 201 residues long: Peptide deformylase (201 aa).

2 residues coordinate Fe cation: Cys-121 and His-163. Glu-164 is an active-site residue. Residue His-167 participates in Fe cation binding.

It belongs to the polypeptide deformylase family. It depends on Fe(2+) as a cofactor.

The enzyme catalyses N-terminal N-formyl-L-methionyl-[peptide] + H2O = N-terminal L-methionyl-[peptide] + formate. Removes the formyl group from the N-terminal Met of newly synthesized proteins. Requires at least a dipeptide for an efficient rate of reaction. N-terminal L-methionine is a prerequisite for activity but the enzyme has broad specificity at other positions. The polypeptide is Peptide deformylase (Parasynechococcus marenigrum (strain WH8102)).